Consider the following 492-residue polypeptide: DEAD-box ATP-dependent RNA helicase RhpA (492 aa).

Positions 20 to 48 match the Q motif motif; the sequence is PSFNDLGLKESVLKSVYEAGFTSPSPIQE. Residues 51-220 form the Helicase ATP-binding domain; the sequence is IPAVLQGRDV…DKILENPIKI (170 aa). Residue 64–71 participates in ATP binding; that stretch reads AQTGTGKT. A DEAD box motif is present at residues 168 to 171; it reads DESD. Positions 231-393 constitute a Helicase C-terminal domain; it reads DITQRFYVIN…EIPTINENQI (163 aa). Positions 445 to 492 are disordered; sequence AIQNPKEKTPKPSNKKTPQHERARSFKKGQHRDRHPKTNHYSKKPKRR. Residues 469–492 are compositionally biased toward basic residues; that stretch reads SFKKGQHRDRHPKTNHYSKKPKRR.

Belongs to the DEAD box helicase family. As to quaternary structure, homodimer. Interacts with RNase J (rnj), might be a member of a minimal RNA degradosome complex.

It is found in the cytoplasm. It catalyses the reaction ATP + H2O = ADP + phosphate + H(+). In terms of biological role, DEAD-box RNA helicase probably involved in RNA degradation. Unwinds dsRNA in both 5'- and 3'-directions. The sequence is that of DEAD-box ATP-dependent RNA helicase RhpA (rhpA) from Helicobacter pylori (strain ATCC 700392 / 26695) (Campylobacter pylori).